The primary structure comprises 622 residues: 1-deoxy-D-xylulose-5-phosphate synthase (622 aa).

Residues His-80 and 121-123 (GHS) each bind thiamine diphosphate. Asp-152 lines the Mg(2+) pocket. Residues 153–154 (GA), Asn-181, Tyr-288, and Glu-369 contribute to the thiamine diphosphate site. Asn-181 lines the Mg(2+) pocket.

This sequence belongs to the transketolase family. DXPS subfamily. In terms of assembly, homodimer. It depends on Mg(2+) as a cofactor. Thiamine diphosphate serves as cofactor.

The enzyme catalyses D-glyceraldehyde 3-phosphate + pyruvate + H(+) = 1-deoxy-D-xylulose 5-phosphate + CO2. It functions in the pathway metabolic intermediate biosynthesis; 1-deoxy-D-xylulose 5-phosphate biosynthesis; 1-deoxy-D-xylulose 5-phosphate from D-glyceraldehyde 3-phosphate and pyruvate: step 1/1. In terms of biological role, catalyzes the acyloin condensation reaction between C atoms 2 and 3 of pyruvate and glyceraldehyde 3-phosphate to yield 1-deoxy-D-xylulose-5-phosphate (DXP). This chain is 1-deoxy-D-xylulose-5-phosphate synthase, found in Psychromonas ingrahamii (strain DSM 17664 / CCUG 51855 / 37).